The following is a 330-amino-acid chain: Protein RecA (330 aa).

66-73 (GPESSGKT) contributes to the ATP binding site.

This sequence belongs to the RecA family.

It localises to the cytoplasm. In terms of biological role, can catalyze the hydrolysis of ATP in the presence of single-stranded DNA, the ATP-dependent uptake of single-stranded DNA by duplex DNA, and the ATP-dependent hybridization of homologous single-stranded DNAs. It interacts with LexA causing its activation and leading to its autocatalytic cleavage. The protein is Protein RecA of Bacteroides thetaiotaomicron (strain ATCC 29148 / DSM 2079 / JCM 5827 / CCUG 10774 / NCTC 10582 / VPI-5482 / E50).